Consider the following 474-residue polypeptide: L-arabinose isomerase (474 aa).

Mn(2+) contacts are provided by E306, E331, H348, and H447.

It belongs to the arabinose isomerase family. Mn(2+) is required as a cofactor.

It carries out the reaction beta-L-arabinopyranose = L-ribulose. The protein operates within carbohydrate degradation; L-arabinose degradation via L-ribulose; D-xylulose 5-phosphate from L-arabinose (bacterial route): step 1/3. Catalyzes the conversion of L-arabinose to L-ribulose. The protein is L-arabinose isomerase of Levilactobacillus brevis (strain ATCC 367 / BCRC 12310 / CIP 105137 / JCM 1170 / LMG 11437 / NCIMB 947 / NCTC 947) (Lactobacillus brevis).